A 481-amino-acid chain; its full sequence is Glutamyl-tRNA(Gln) amidotransferase subunit A (481 aa).

Catalysis depends on charge relay system residues lysine 76 and serine 151. Serine 175 acts as the Acyl-ester intermediate in catalysis.

The protein belongs to the amidase family. GatA subfamily. Heterotrimer of A, B and C subunits.

It carries out the reaction L-glutamyl-tRNA(Gln) + L-glutamine + ATP + H2O = L-glutaminyl-tRNA(Gln) + L-glutamate + ADP + phosphate + H(+). Its function is as follows. Allows the formation of correctly charged Gln-tRNA(Gln) through the transamidation of misacylated Glu-tRNA(Gln) in organisms which lack glutaminyl-tRNA synthetase. The reaction takes place in the presence of glutamine and ATP through an activated gamma-phospho-Glu-tRNA(Gln). This is Glutamyl-tRNA(Gln) amidotransferase subunit A from Chlorobaculum tepidum (strain ATCC 49652 / DSM 12025 / NBRC 103806 / TLS) (Chlorobium tepidum).